The sequence spans 141 residues: Hemoglobin subunit alpha (141 aa).

Residues V1 to R141 form the Globin domain. The residue at position 3 (S3) is a Phosphoserine. N6-succinyllysine is present on residues K7 and K11. K16 is subject to N6-acetyllysine; alternate. K16 bears the N6-succinyllysine; alternate mark. Y24 is subject to Phosphotyrosine. Phosphoserine is present on S35. K40 bears the N6-succinyllysine mark. The residue at position 49 (S49) is a Phosphoserine. Residue H58 coordinates O2. H87 contributes to the heme b binding site. Position 102 is a phosphoserine (S102). T108 is modified (phosphothreonine). S124 and S131 each carry phosphoserine. Phosphothreonine occurs at positions 134 and 137. S138 is modified (phosphoserine).

It belongs to the globin family. Heterotetramer of two alpha chains and two beta chains. As to expression, red blood cells.

In terms of biological role, involved in oxygen transport from the lung to the various peripheral tissues. Its function is as follows. Hemopressin acts as an antagonist peptide of the cannabinoid receptor CNR1. Hemopressin-binding efficiently blocks cannabinoid receptor CNR1 and subsequent signaling. This chain is Hemoglobin subunit alpha (HBA), found in Spermophilus citellus (European ground squirrel).